We begin with the raw amino-acid sequence, 94 residues long: Co-chaperonin GroES (94 aa).

This sequence belongs to the GroES chaperonin family. Heptamer of 7 subunits arranged in a ring. Interacts with the chaperonin GroEL.

It is found in the cytoplasm. Functionally, together with the chaperonin GroEL, plays an essential role in assisting protein folding. The GroEL-GroES system forms a nano-cage that allows encapsulation of the non-native substrate proteins and provides a physical environment optimized to promote and accelerate protein folding. GroES binds to the apical surface of the GroEL ring, thereby capping the opening of the GroEL channel. In Acetivibrio thermocellus (strain ATCC 27405 / DSM 1237 / JCM 9322 / NBRC 103400 / NCIMB 10682 / NRRL B-4536 / VPI 7372) (Clostridium thermocellum), this protein is Co-chaperonin GroES.